Consider the following 222-residue polypeptide: Large ribosomal subunit protein bL20 (222 aa).

This sequence belongs to the bacterial ribosomal protein bL20 family.

Functionally, binds directly to 23S ribosomal RNA and is necessary for the in vitro assembly process of the 50S ribosomal subunit. It is not involved in the protein synthesizing functions of that subunit. In Paenarthrobacter aurescens (strain TC1), this protein is Large ribosomal subunit protein bL20 (rplT).